A 346-amino-acid polypeptide reads, in one-letter code: L-glyceraldehyde 3-phosphate reductase (346 aa).

NADP(+) contacts are provided by tryptophan 33, aspartate 61, tyrosine 66, serine 168, glutamine 193, threonine 223, leucine 225, glutamine 227, lysine 233, serine 303, glutamine 307, and asparagine 311.

It belongs to the shaker potassium channel beta subunit family. In terms of assembly, homotetramer. Homooctamer.

The enzyme catalyses a primary alcohol + NADP(+) = an aldehyde + NADPH + H(+). It catalyses the reaction hydroxyacetone + NADP(+) = methylglyoxal + NADPH + H(+). Functionally, aldo-keto reductase that catalyzes the stereospecific, NADPH-dependent reduction of L-glyceraldehyde 3-phosphate (L-GAP) to L-glycerol 3-phosphate (L-G3P). The physiological role of Gpr is the detoxification of L-GAP, which may be formed via non-enzymatic and/or enzymatic racemization of D-GAP. Also contributes to cellular methylglyoxal detoxification by catalyzing the NADPH-dependent conversion of methylglyoxal to acetol. However, the catalytic efficiency of methylglyoxal reductase activity is more than 2 orders of magnitude lower than the L-GAP reductase activity. In addition, exhibits activity with glyoxal and probably plays a significant role in detoxification of glyoxal in vivo. Shows broad specificity and can use aromatic aldehydes such as 4-nitrobenzaldehyde and benzaldehyde, D,L-glyceraldehyde, phenylglyoxal, isatin and the model substrate 4-nitrobenzaldehyde. The polypeptide is L-glyceraldehyde 3-phosphate reductase (Escherichia coli (strain K12)).